We begin with the raw amino-acid sequence, 281 residues long: Proteasome subunit beta (281 aa).

A propeptide spans 1-53 (removed in mature form; by autocatalysis); that stretch reads MEANTRSTGRLPAAFLTPGSSSFMDFLSDQSPEMLPGNRSLPPLQGAVEAPHG. T54 acts as the Nucleophile in catalysis.

Belongs to the peptidase T1B family. In terms of assembly, the 20S proteasome core is composed of 14 alpha and 14 beta subunits that assemble into four stacked heptameric rings, resulting in a barrel-shaped structure. The two inner rings, each composed of seven catalytic beta subunits, are sandwiched by two outer rings, each composed of seven alpha subunits. The catalytic chamber with the active sites is on the inside of the barrel. Has a gated structure, the ends of the cylinder being occluded by the N-termini of the alpha-subunits. Is capped by the proteasome-associated ATPase, ARC.

The protein resides in the cytoplasm. The enzyme catalyses Cleavage of peptide bonds with very broad specificity.. The protein operates within protein degradation; proteasomal Pup-dependent pathway. Its activity is regulated as follows. The formation of the proteasomal ATPase ARC-20S proteasome complex, likely via the docking of the C-termini of ARC into the intersubunit pockets in the alpha-rings, may trigger opening of the gate for substrate entry. Interconversion between the open-gate and close-gate conformations leads to a dynamic regulation of the 20S proteasome proteolysis activity. Functionally, component of the proteasome core, a large protease complex with broad specificity involved in protein degradation. The chain is Proteasome subunit beta from Streptomyces griseus subsp. griseus (strain JCM 4626 / CBS 651.72 / NBRC 13350 / KCC S-0626 / ISP 5235).